Consider the following 163-residue polypeptide: Translation initiation factor IF-3-like (163 aa).

Belongs to the IF-3 family.

This Nostoc sp. (strain PCC 7120 / SAG 25.82 / UTEX 2576) protein is Translation initiation factor IF-3-like.